Consider the following 105-residue polypeptide: ATP-dependent Clp protease adapter protein ClpS (105 aa).

Belongs to the ClpS family. Binds to the N-terminal domain of the chaperone ClpA.

Its function is as follows. Involved in the modulation of the specificity of the ClpAP-mediated ATP-dependent protein degradation. This chain is ATP-dependent Clp protease adapter protein ClpS, found in Streptomyces avermitilis (strain ATCC 31267 / DSM 46492 / JCM 5070 / NBRC 14893 / NCIMB 12804 / NRRL 8165 / MA-4680).